Reading from the N-terminus, the 164-residue chain is NADH-quinone oxidoreductase subunit I (164 aa).

4Fe-4S ferredoxin-type domains lie at 55–85 (LRRYPNGEERCIACKLCEAVCPAQAITIDAE) and 95–124 (TRYDIDMTKCIYCGFCEEACPVDAIVEGPN). Cys65, Cys68, Cys71, Cys75, Cys104, Cys107, Cys110, and Cys114 together coordinate [4Fe-4S] cluster.

The protein belongs to the complex I 23 kDa subunit family. As to quaternary structure, NDH-1 is composed of 14 different subunits. Subunits NuoA, H, J, K, L, M, N constitute the membrane sector of the complex. It depends on [4Fe-4S] cluster as a cofactor.

It is found in the cell inner membrane. It carries out the reaction a quinone + NADH + 5 H(+)(in) = a quinol + NAD(+) + 4 H(+)(out). Its function is as follows. NDH-1 shuttles electrons from NADH, via FMN and iron-sulfur (Fe-S) centers, to quinones in the respiratory chain. The immediate electron acceptor for the enzyme in this species is believed to be ubiquinone. Couples the redox reaction to proton translocation (for every two electrons transferred, four hydrogen ions are translocated across the cytoplasmic membrane), and thus conserves the redox energy in a proton gradient. The protein is NADH-quinone oxidoreductase subunit I of Roseobacter denitrificans (strain ATCC 33942 / OCh 114) (Erythrobacter sp. (strain OCh 114)).